Here is an 899-residue protein sequence, read N- to C-terminus: Protein translocase subunit SecA (899 aa).

Residues Gln87, 105-109 (GEGKT), and Asp512 each bind ATP. The segment at 846–899 (MEEEQQQQAQKKIVFNLGEEPATAPQPARSKKSASRNDPCPCGSGKKYKKCCGK) is disordered. The Zn(2+) site is built by Cys885, Cys887, Cys896, and Cys897.

It belongs to the SecA family. Monomer and homodimer. Part of the essential Sec protein translocation apparatus which comprises SecA, SecYEG and auxiliary proteins SecDF-YajC and YidC. It depends on Zn(2+) as a cofactor.

The protein localises to the cell inner membrane. It localises to the cytoplasm. It catalyses the reaction ATP + H2O + cellular proteinSide 1 = ADP + phosphate + cellular proteinSide 2.. Its function is as follows. Part of the Sec protein translocase complex. Interacts with the SecYEG preprotein conducting channel. Has a central role in coupling the hydrolysis of ATP to the transfer of proteins into and across the cell membrane, serving as an ATP-driven molecular motor driving the stepwise translocation of polypeptide chains across the membrane. This is Protein translocase subunit SecA from Geobacter metallireducens (strain ATCC 53774 / DSM 7210 / GS-15).